A 310-amino-acid polypeptide reads, in one-letter code: Aspartate carbamoyltransferase catalytic subunit (310 aa).

R60 and T61 together coordinate carbamoyl phosphate. K88 serves as a coordination point for L-aspartate. Residues R110, H138, and Q141 each contribute to the carbamoyl phosphate site. Residues R171 and R225 each contribute to the L-aspartate site. Carbamoyl phosphate is bound by residues G266 and P267.

It belongs to the aspartate/ornithine carbamoyltransferase superfamily. ATCase family. As to quaternary structure, heterododecamer (2C3:3R2) of six catalytic PyrB chains organized as two trimers (C3), and six regulatory PyrI chains organized as three dimers (R2).

The catalysed reaction is carbamoyl phosphate + L-aspartate = N-carbamoyl-L-aspartate + phosphate + H(+). Its pathway is pyrimidine metabolism; UMP biosynthesis via de novo pathway; (S)-dihydroorotate from bicarbonate: step 2/3. Its function is as follows. Catalyzes the condensation of carbamoyl phosphate and aspartate to form carbamoyl aspartate and inorganic phosphate, the committed step in the de novo pyrimidine nucleotide biosynthesis pathway. This is Aspartate carbamoyltransferase catalytic subunit from Christiangramia forsetii (strain DSM 17595 / CGMCC 1.15422 / KT0803) (Gramella forsetii).